Here is a 964-residue protein sequence, read N- to C-terminus: Syndetin (964 aa).

Residue methionine 1 is modified to N-acetylmethionine. Positions 1–25 (MQKIKSLMTRQGLKSPPESLNDLGA) are disordered. Residue serine 15 is modified to Phosphoserine. Coiled-coil stretches lie at residues 81–107 (LNLQ…VADL) and 216–244 (YSCI…LSKI). Phosphoserine occurs at positions 494, 498, 559, and 561. The tract at residues 532–563 (DEETEDVLASNGYESDEQEKSAYQDYDSDSDV) is disordered. Lysine 963 is covalently cross-linked (Glycyl lysine isopeptide (Lys-Gly) (interchain with G-Cter in SUMO1); alternate). Lysine 963 is covalently cross-linked (Glycyl lysine isopeptide (Lys-Gly) (interchain with G-Cter in SUMO2); alternate).

This sequence belongs to the syndetin family. Component of the endosome-associated retrograde protein (EARP) complex, composed of VPS51, VPS52, VPS53 and VPS50/Syndetin. The EARP complex interacts with EIPR1. Interacts with VPS51 and VPS53 in an EIPR1-independent manner.

The protein resides in the recycling endosome. Its subcellular location is the membrane. In terms of biological role, acts as a component of the EARP complex that is involved in endocytic recycling. The EARP complex associates with Rab4-positive endosomes and promotes recycling of internalized transferrin receptor (TFRC) to the plasma membrane. Within the EARP complex, required to tether the complex to recycling endosomes. Not involved in retrograde transport from early and late endosomes to the trans-Golgi network (TGN). The chain is Syndetin from Mus musculus (Mouse).